Consider the following 23-residue polypeptide: Septenin 2 (23 aa).

As to expression, expressed in skin glands.

The protein resides in the secreted. Its function is as follows. May act as an antimicrobial peptide. The sequence is that of Septenin 2 from Osteopilus septentrionalis (Cuban treefrog).